The following is a 795-amino-acid chain: Glycerol-3-phosphate acyltransferase 2, mitochondrial (795 aa).

The tract at residues 1-21 (MATMLEGRCQTQPRSSPSGRE) is disordered. Topologically, residues 1–305 (MATMLEGRCQ…LGPRLSALGQ (305 aa)) are cytoplasmic. Over residues 9–18 (CQTQPRSSPS) the composition is skewed to polar residues. Positions 180–331 (QLHKGQMKMV…DALLVPVAVT (152 aa)) are acyltransferase. The HXXXXD motif motif lies at 205–210 (HKTLLD). Residues 306-332 (AWVGFVVQAVQVGIVPDALLVPVAVTY) traverse the membrane as a helical segment. Over 333 to 449 (DLVPDAPCDI…QLLVRRLSCH (117 aa)) the chain is Mitochondrial intermembrane. The helical transmembrane segment at 450–472 (VLSASVGSSAVMSTAIMATLLLF) threads the bilayer. Residues 473–795 (KHQKLLGEFS…EQFIRQFICS (323 aa)) are Cytoplasmic-facing. Ser-656 carries the post-translational modification Phosphoserine. Thr-660 carries the post-translational modification Phosphothreonine. 2 positions are modified to phosphoserine: Ser-662 and Ser-664.

This sequence belongs to the GPAT/DAPAT family. As to quaternary structure, interacts with PIWIL2.

The protein resides in the mitochondrion outer membrane. It carries out the reaction sn-glycerol 3-phosphate + an acyl-CoA = a 1-acyl-sn-glycero-3-phosphate + CoA. It catalyses the reaction a 1-acyl-sn-glycero-3-phosphate + an acyl-CoA = a 1,2-diacyl-sn-glycero-3-phosphate + CoA. The catalysed reaction is 1-(9Z-octadecenoyl)-sn-glycero-3-phosphate + (9Z)-octadecenoyl-CoA = 1,2-di-(9Z-octadecenoyl)-sn-glycero-3-phosphate + CoA. The enzyme catalyses 1-(9Z-octadecenoyl)-sn-glycero-3-phosphate + (5Z,8Z,11Z,14Z)-eicosatetraenoyl-CoA = 1-(9Z)-octadecenoyl-2-(5Z,8Z,11Z,14Z)-eicosatetraenoyl-sn-glycero-3-phosphate + CoA. It carries out the reaction (5Z,8Z,11Z,14Z)-eicosatetraenoyl-CoA + sn-glycerol 3-phosphate = 1-(5Z,8Z,11Z,14Z-eicosatetraenoyl)-sn-glycero-3-phosphate + CoA. Its pathway is phospholipid metabolism; CDP-diacylglycerol biosynthesis; CDP-diacylglycerol from sn-glycerol 3-phosphate: step 1/3. Its activity is regulated as follows. Inhibited by N-ethylmaleimide (NEM). Functionally, transfers an acyl-group from acyl-ACP to the sn-1 position of glycerol-3-phosphate producing a lysophosphatidic acid (LPA), an essential step for the triacylglycerol (TAG) and glycerophospholipids. In vitro also transfers an acyl-group from acyl-ACP to the LPA producing a phosphatidic acid (PA). Prefers arachidonoyl-CoA as the acyl donor. Required for primary processing step during piRNA biosynthesis. Molecular mechanisms by which it promotes piRNA biosynthesis are unclear and do not involve its acyltransferase activity. The sequence is that of Glycerol-3-phosphate acyltransferase 2, mitochondrial from Homo sapiens (Human).